The sequence spans 92 residues: Small ribosomal subunit protein bS16 (92 aa).

It belongs to the bacterial ribosomal protein bS16 family.

This is Small ribosomal subunit protein bS16 from Staphylococcus carnosus (strain TM300).